The chain runs to 514 residues: ATP synthase subunit alpha (514 aa).

Position 170 to 177 (170 to 177 (GDRQIGKT)) interacts with ATP.

The protein belongs to the ATPase alpha/beta chains family. In terms of assembly, F-type ATPases have 2 components, CF(1) - the catalytic core - and CF(0) - the membrane proton channel. CF(1) has five subunits: alpha(3), beta(3), gamma(1), delta(1), epsilon(1). CF(0) has three main subunits: a(1), b(2) and c(9-12). The alpha and beta chains form an alternating ring which encloses part of the gamma chain. CF(1) is attached to CF(0) by a central stalk formed by the gamma and epsilon chains, while a peripheral stalk is formed by the delta and b chains.

It is found in the cell inner membrane. It catalyses the reaction ATP + H2O + 4 H(+)(in) = ADP + phosphate + 5 H(+)(out). In terms of biological role, produces ATP from ADP in the presence of a proton gradient across the membrane. The alpha chain is a regulatory subunit. The sequence is that of ATP synthase subunit alpha from Pseudomonas entomophila (strain L48).